The chain runs to 452 residues: Zinc finger protein GAI-ASSOCIATED FACTOR 1 (452 aa).

The segment covering M1–T32 has biased composition (polar residues). The segment at M1–S47 is disordered. S53 is subject to Phosphoserine. C2H2-type zinc fingers lie at residues F63–H85 and Y104–H134. The Nuclear localization signal signature appears at I126–K133. A C2H2-type 2; degenerate zinc finger spans residues W139 to G162. 8 residues coordinate Zn(2+): C141, C144, H157, C161, C168, C170, H183, and C187. The CCHC-type 2; atypical zinc finger occupies Y166 to A189. An SHR-binding region spans residues R176–D188. Residues R196–E254 form a disordered region. Polar residues predominate over residues I231–P245.

As to quaternary structure, interacts with the DELLA proteins (e.g. GAI/RGA2, RGA, RGL1, RGL2 and RGLG3), acting as coactivators and with TPR1 and TPR4, acting as a corepressors, at the promoter of GA20OX2 gene. In terms of tissue distribution, observed in vegetative tissues. Mainly expressed in hypocotyls, petioles, shoot apices, root tips, and trichomes, and, at low levels, in leaves, stems and flowers.

It localises to the nucleus. With respect to regulation, transcription activation is repressed by gibberellic acid GA(3) in the presence of TPR4. Its function is as follows. Transcription factor that acts as a positive regulator of gibberellin (GA) action, homeostasis and signaling. GA converts the GAF1 complex from transcriptional activator to repressor via the degradation of DELLA proteins. The sequence is that of Zinc finger protein GAI-ASSOCIATED FACTOR 1 from Arabidopsis thaliana (Mouse-ear cress).